Consider the following 107-residue polypeptide: Phosphoribosyl-ATP pyrophosphatase (107 aa).

Belongs to the PRA-PH family.

Its subcellular location is the cytoplasm. It catalyses the reaction 1-(5-phospho-beta-D-ribosyl)-ATP + H2O = 1-(5-phospho-beta-D-ribosyl)-5'-AMP + diphosphate + H(+). The protein operates within amino-acid biosynthesis; L-histidine biosynthesis; L-histidine from 5-phospho-alpha-D-ribose 1-diphosphate: step 2/9. The sequence is that of Phosphoribosyl-ATP pyrophosphatase from Bacillus thuringiensis (strain Al Hakam).